Here is a 209-residue protein sequence, read N- to C-terminus: A-type ATP synthase subunit D (209 aa).

It belongs to the V-ATPase D subunit family. As to quaternary structure, has multiple subunits with at least A(3), B(3), C, D, E, F, H, I and proteolipid K(x).

It localises to the cell membrane. In terms of biological role, component of the A-type ATP synthase that produces ATP from ADP in the presence of a proton gradient across the membrane. This Methanoregula boonei (strain DSM 21154 / JCM 14090 / 6A8) protein is A-type ATP synthase subunit D.